The sequence spans 883 residues: Alanine--tRNA ligase (883 aa).

The Zn(2+) site is built by His-560, His-564, Cys-665, and His-669.

It belongs to the class-II aminoacyl-tRNA synthetase family. Zn(2+) is required as a cofactor.

The protein resides in the cytoplasm. It catalyses the reaction tRNA(Ala) + L-alanine + ATP = L-alanyl-tRNA(Ala) + AMP + diphosphate. In terms of biological role, catalyzes the attachment of alanine to tRNA(Ala) in a two-step reaction: alanine is first activated by ATP to form Ala-AMP and then transferred to the acceptor end of tRNA(Ala). Also edits incorrectly charged Ser-tRNA(Ala) and Gly-tRNA(Ala) via its editing domain. The chain is Alanine--tRNA ligase from Mesomycoplasma hyopneumoniae (strain 232) (Mycoplasma hyopneumoniae).